Reading from the N-terminus, the 394-residue chain is Methionine import ATP-binding protein MetN 2 (394 aa).

Positions 39–278 (VSLEQVGKVF…PRHGATRALL (240 aa)) constitute an ABC transporter domain. 75–82 (GRSGAGKS) contacts ATP.

This sequence belongs to the ABC transporter superfamily. Methionine importer (TC 3.A.1.24) family. In terms of assembly, the complex is composed of two ATP-binding proteins (MetN), two transmembrane proteins (MetI) and a solute-binding protein (MetQ).

It localises to the cell inner membrane. The catalysed reaction is L-methionine(out) + ATP + H2O = L-methionine(in) + ADP + phosphate + H(+). It catalyses the reaction D-methionine(out) + ATP + H2O = D-methionine(in) + ADP + phosphate + H(+). Part of the ABC transporter complex MetNIQ involved in methionine import. Responsible for energy coupling to the transport system. The sequence is that of Methionine import ATP-binding protein MetN 2 from Burkholderia cenocepacia (strain HI2424).